A 322-amino-acid polypeptide reads, in one-letter code: Ribosomal RNA small subunit methyltransferase H (322 aa).

Residues 42-44 (GGH), D62, F86, D107, and Q114 contribute to the S-adenosyl-L-methionine site.

This sequence belongs to the methyltransferase superfamily. RsmH family.

Its subcellular location is the cytoplasm. It catalyses the reaction cytidine(1402) in 16S rRNA + S-adenosyl-L-methionine = N(4)-methylcytidine(1402) in 16S rRNA + S-adenosyl-L-homocysteine + H(+). In terms of biological role, specifically methylates the N4 position of cytidine in position 1402 (C1402) of 16S rRNA. The sequence is that of Ribosomal RNA small subunit methyltransferase H from Janthinobacterium sp. (strain Marseille) (Minibacterium massiliensis).